The chain runs to 239 residues: Pyridoxine 5'-phosphate synthase (239 aa).

3-amino-2-oxopropyl phosphate is bound at residue asparagine 7. 9 to 10 is a binding site for 1-deoxy-D-xylulose 5-phosphate; that stretch reads DH. Arginine 18 serves as a coordination point for 3-amino-2-oxopropyl phosphate. Residue histidine 43 is the Proton acceptor of the active site. 1-deoxy-D-xylulose 5-phosphate-binding residues include arginine 45 and histidine 50. Catalysis depends on glutamate 70, which acts as the Proton acceptor. Threonine 100 contributes to the 1-deoxy-D-xylulose 5-phosphate binding site. The active-site Proton donor is the histidine 191. 3-amino-2-oxopropyl phosphate-binding positions include glycine 192 and 213–214; that span reads GH.

This sequence belongs to the PNP synthase family. As to quaternary structure, homooctamer; tetramer of dimers.

It is found in the cytoplasm. The enzyme catalyses 3-amino-2-oxopropyl phosphate + 1-deoxy-D-xylulose 5-phosphate = pyridoxine 5'-phosphate + phosphate + 2 H2O + H(+). It participates in cofactor biosynthesis; pyridoxine 5'-phosphate biosynthesis; pyridoxine 5'-phosphate from D-erythrose 4-phosphate: step 5/5. Functionally, catalyzes the complicated ring closure reaction between the two acyclic compounds 1-deoxy-D-xylulose-5-phosphate (DXP) and 3-amino-2-oxopropyl phosphate (1-amino-acetone-3-phosphate or AAP) to form pyridoxine 5'-phosphate (PNP) and inorganic phosphate. This Geotalea daltonii (strain DSM 22248 / JCM 15807 / FRC-32) (Geobacter daltonii) protein is Pyridoxine 5'-phosphate synthase.